Consider the following 116-residue polypeptide: NADH-quinone oxidoreductase subunit A (116 aa).

The next 3 helical transmembrane spans lie at 3 to 23 (FTLLVVVLLTAIAFVGVVIAL), 61 to 81 (FAILFLMFDVETVFLFPWAVI), and 88 to 108 (QGLISILFFLVVLVLGLAYAW).

The protein belongs to the complex I subunit 3 family. NDH-1 is composed of 14 different subunits. Subunits NuoA, H, J, K, L, M, N constitute the membrane sector of the complex.

Its subcellular location is the cell inner membrane. It carries out the reaction a quinone + NADH + 5 H(+)(in) = a quinol + NAD(+) + 4 H(+)(out). NDH-1 shuttles electrons from NADH, via FMN and iron-sulfur (Fe-S) centers, to quinones in the respiratory chain. The immediate electron acceptor for the enzyme in this species is believed to be a menaquinone. Couples the redox reaction to proton translocation (for every two electrons transferred, four hydrogen ions are translocated across the cytoplasmic membrane), and thus conserves the redox energy in a proton gradient. The polypeptide is NADH-quinone oxidoreductase subunit A (Bacteroides fragilis (strain ATCC 25285 / DSM 2151 / CCUG 4856 / JCM 11019 / LMG 10263 / NCTC 9343 / Onslow / VPI 2553 / EN-2)).